Here is an 89-residue protein sequence, read N- to C-terminus: MLNIGFGNRVAAHRVVAIVTPNTSPMKRLKDEAKKAGRLVDATCGRKTRAILVMDSNHVILSAIQADTLAQRYAAVKEKKEEGTHNEPE.

It belongs to the RemA family.

The protein is Putative regulatory protein Dalk_1931 of Desulfatibacillum aliphaticivorans.